The sequence spans 368 residues: Cyclic AMP-responsive element-binding protein 3 (368 aa).

The transcription activation (acidic) stretch occupies residues 1–95 (MSHMELALDP…LSQEHVSIDL (95 aa)). The Cytoplasmic portion of the chain corresponds to 1-229 (MSHMELALDP…VIQTANKASS (229 aa)). Short sequence motifs (LXXLL motif) lie at residues 16 to 20 (LGFLL) and 57 to 61 (LSCLP). The short motif at 81-84 (DHTY) is the HCFC1-binding-motif (HBM) element. The 64-residue stretch at 153–216 (VLKRVRRKIR…LSLLDQLRRL (64 aa)) folds into the bZIP domain. Residues 155–184 (KRVRRKIRNKKSAQESRRKKKVYVGGLESR) are basic motif. The leucine-zipper stretch occupies residues 186 to 193 (LKYTAQNL). The helical; Signal-anchor for type II membrane protein transmembrane segment at 230–250 (SSTCVLVLLFSFCLLLVPAMY) threads the bilayer. The Lumenal segment spans residues 251 to 368 (SSDTRGSLPA…SVILQGRYSG (118 aa)). Residue Asn344 is glycosylated (N-linked (GlcNAc...) asparagine).

This sequence belongs to the bZIP family. ATF subfamily. In terms of assembly, homodimer. Interacts with HCFC1; the interaction is required to stimulate CREB3 transcriptional activity. Interacts with CREBZF; the interaction occurs only in combination with HCFC1. Interacts (via central part and transmembrane region) with DCSTAMP (via C-terminus cytoplasmic domain). Interacts with OS9. Interacts (via leucine-zipper domain) with CREBRF (via leucine-zipper domain); the interaction occurs only after CREB3 activation and promotes CREB3 degradation. Interacts (via C-terminal domain) with CCR1. First proteolytically cleaved by site-1 protease (S1P) that generates membrane-associated N-terminus and a luminal C-terminus forms. The membrane-associated N-terminus form is further proteolytically processed probably by the site-2 protease (S2P) through a regulated intramembrane proteolysis (RIP), releasing the transcriptional active processed cyclic AMP-responsive element-binding protein 3 form, which is transported to the nucleus. The proteolytic cleavage is strongly induced during dendritic cell (DC) maturation and inhibited by DCSTAMP. That form is rapidly degraded. In terms of processing, N-glycosylated. In terms of tissue distribution, expressed in trigeminal ganglia (at protein level).

Its subcellular location is the endoplasmic reticulum membrane. It is found in the golgi apparatus. The protein resides in the nucleus. It localises to the cytoplasm. Endoplasmic reticulum (ER)-bound sequence-specific transcription factor that directly binds DNA and activates transcription. Plays a role in the unfolded protein response (UPR), promoting cell survival versus ER stress-induced apoptotic cell death. Also involved in cell proliferation, migration and differentiation, tumor suppression and inflammatory gene expression. Acts as a positive regulator of LKN-1/CCL15-induced chemotaxis signaling of leukocyte cell migration. Associates with chromatin to the HERPUD1 promoter. Also induces transcriptional activation of chemokine receptors. Functions as a negative transcriptional regulator in ligand-induced transcriptional activation of the glucocorticoid receptor NR3C1 by recruiting and activating histone deacetylases (HDAC1, HDAC2 and HDAC6). Also decreases the acetylation level of histone H4. Does not promote the chemotactic activity of leukocyte cells. Functionally, this is the transcriptionally active form that translocates to the nucleus and activates unfolded protein response (UPR) target genes during endoplasmic reticulum (ER) stress response. Binds the cAMP response element (CRE) (consensus: 5'-GTGACGT[AG][AG]-3') and C/EBP sequences present in many promoters to activate transcription of the genes. Binds to the unfolded protein response element (UPRE) consensus sequences sites. Binds DNA to the 5'-CCAC[GA]-3'half of ERSE II (5'-ATTGG-N-CCACG-3'). The chain is Cyclic AMP-responsive element-binding protein 3 (CREB3) from Bos taurus (Bovine).